A 103-amino-acid chain; its full sequence is Large ribosomal subunit protein uL24 (103 aa).

Belongs to the universal ribosomal protein uL24 family. Part of the 50S ribosomal subunit.

In terms of biological role, one of two assembly initiator proteins, it binds directly to the 5'-end of the 23S rRNA, where it nucleates assembly of the 50S subunit. One of the proteins that surrounds the polypeptide exit tunnel on the outside of the subunit. This Treponema pallidum (strain Nichols) protein is Large ribosomal subunit protein uL24.